We begin with the raw amino-acid sequence, 472 residues long: UDP-N-acetylmuramate--L-alanine ligase (472 aa).

119-125 (GTHGKTT) contacts ATP.

It belongs to the MurCDEF family.

It localises to the cytoplasm. The catalysed reaction is UDP-N-acetyl-alpha-D-muramate + L-alanine + ATP = UDP-N-acetyl-alpha-D-muramoyl-L-alanine + ADP + phosphate + H(+). The protein operates within cell wall biogenesis; peptidoglycan biosynthesis. In terms of biological role, cell wall formation. In Caulobacter sp. (strain K31), this protein is UDP-N-acetylmuramate--L-alanine ligase.